The primary structure comprises 338 residues: HLA class I histocompatibility antigen, alpha chain G (338 aa).

The signal sequence occupies residues 1 to 24 (MVVMAPRTLFLLLSGALTLTETWA). A VL9 epitope region spans residues 3 to 11 (VMAPRTLFL). The segment at 25–114 (GSHSMRYFSA…LRGYYNQSEA (90 aa)) is alpha-1. At 25–308 (GSHSMRYFSA…KQSSLPTIPI (284 aa)) the chain is on the extracellular side. Residues tyrosine 31, histidine 94, asparagine 101, and tyrosine 108 each contribute to the a peptide antigen site. An N-linked (GlcNAc...) asparagine glycan is attached at asparagine 110. The interval 115–206 (SSHTLQWMIG…ENGKEMLQRA (92 aa)) is alpha-2. An intrachain disulfide couples cysteine 125 to cysteine 188. Serine 167, lysine 170, glutamine 179, arginine 180, tyrosine 183, and tyrosine 195 together coordinate a peptide antigen. Positions 207 to 298 (DPPKTHVTHH…GLPEPLMLRW (92 aa)) are alpha-3. Positions 209–299 (PKTHVTHHPV…LPEPLMLRWK (91 aa)) constitute an Ig-like C1-type domain. A disulfide bridge links cysteine 227 with cysteine 283. The tract at residues 299–308 (KQSSLPTIPI) is connecting peptide. A helical transmembrane segment spans residues 309-332 (MGIVAGLVVLAAVVTGAAVAAVLW). Residues 333–338 (RKKSSD) lie on the Cytoplasmic side of the membrane. The short motif at 334 to 336 (KKS) is the ER-retrieval signal element.

The protein belongs to the MHC class I family. In terms of assembly, forms a heterotrimer with B2M and a self-peptide (peptide-bound HLA-G-B2M). HLA-G-B2M complex interacts with components of the antigen processing machinery TAPBP and TAP1-TAP2 complex; this interaction is required for loading of high affinity peptides and heterotrimer translocation to the cell surface. Interacts with CALCR; this interaction is required for appropriate folding. Interacts with COPB1; this interaction mediates the endoplasmic reticulum (ER) retrieval of HLA-G-B2M complexes that bind low affinity peptides. On the cell surface, peptide-bound HLA-G-B2M molecules (referred to as monomers) can form disulfide-linked homomultimers, homodimers and homotrimers. Interacts with KIR2DL4; this interaction is direct. Interacts with LILRB1 and LILRB2 receptors; this interaction is direct. Interacts with CD160; this interactions is direct. Interacts with CD8A homodimer; this interaction is direct and might down-regulate T cell receptor signaling. Isoform 2: Forms a non-disulfide-linked homodimer and interacts with LILRB2. N-glycosylated. Post-translationally, produced by proteolytic cleavage at the cell surface (shedding) by matrix metalloproteinase MMP2. Expressed in adult eye. Expressed in immune cell subsets including monocytes, myeloid and plasmacytoid dendritic cells and regulatory T cells (Tr1)(at protein level). Secreted by follicular dendritic cell and follicular helper T cells. In terms of tissue distribution, detected in physiological fluids including amniotic fluid and serum. As to expression, expressed in placenta, amniotic membrane, skin, cord blood and peripheral blood mononuclear cells.

The protein resides in the cell membrane. Its subcellular location is the endoplasmic reticulum membrane. It localises to the early endosome membrane. It is found in the secreted. The protein localises to the early endosome. The protein resides in the cell projection. Its subcellular location is the filopodium membrane. Functionally, non-classical major histocompatibility class Ib molecule involved in immune regulatory processes at the maternal-fetal interface. In complex with B2M/beta-2 microglobulin binds a limited repertoire of nonamer self-peptides derived from intracellular proteins including histones and ribosomal proteins. Peptide-bound HLA-G-B2M complex acts as a ligand for inhibitory/activating KIR2DL4, LILRB1 and LILRB2 receptors on uterine immune cells to promote fetal development while maintaining maternal-fetal tolerance. Upon interaction with KIR2DL4 and LILRB1 receptors on decidual NK cells, it triggers NK cell senescence-associated secretory phenotype as a molecular switch to promote vascular remodeling and fetal growth in early pregnancy. Through interaction with KIR2DL4 receptor on decidual macrophages induces pro-inflammatory cytokine production mainly associated with tissue remodeling. Through interaction with LILRB2 receptor triggers differentiation of type 1 regulatory T cells and myeloid-derived suppressor cells, both of which actively maintain maternal-fetal tolerance. May play a role in balancing tolerance and antiviral-immunity at maternal-fetal interface by keeping in check the effector functions of NK, CD8+ T cells and B cells. Reprograms B cells toward an immune suppressive phenotype via LILRB1. May induce immune activation/suppression via intercellular membrane transfer (trogocytosis), likely enabling interaction with KIR2DL4, which resides mostly in endosomes. Through interaction with the inhibitory receptor CD160 on endothelial cells may control angiogenesis in immune privileged sites. Likely does not bind B2M and presents peptides. Negatively regulates NK cell- and CD8+ T cell-mediated cytotoxicity. Its function is as follows. Non-classical major histocompatibility class Ib molecule involved in immune regulatory processes at the maternal-fetal interface. In complex with B2M/beta-2 microglobulin binds a limited repertoire of nonamer self-peptides derived from intracellular proteins including histones and ribosomal proteins. Peptide-bound HLA-G-B2M complex acts as a ligand for inhibitory/activating KIR2DL4, LILRB1 and LILRB2 receptors on uterine immune cells to promote fetal development while maintaining maternal-fetal tolerance. Upon interaction with KIR2DL4 and LILRB1 receptors on decidual NK cells, it triggers NK cell senescence-associated secretory phenotype as a molecular switch to promote vascular remodeling and fetal growth in early pregnancy. Through interaction with KIR2DL4 receptor on decidual macrophages induces pro-inflammatory cytokine production mainly associated with tissue remodeling. Through interaction with LILRB2 receptor triggers differentiation of type 1 regulatory T cells and myeloid-derived suppressor cells, both of which actively maintain maternal-fetal tolerance. Reprograms B cells toward an immune suppressive phenotype via LILRB1. In terms of biological role, likely does not bind B2M and presents peptides. The protein is HLA class I histocompatibility antigen, alpha chain G of Homo sapiens (Human).